Reading from the N-terminus, the 369-residue chain is Transmembrane protein 198 (369 aa).

Transmembrane regions (helical) follow at residues 37 to 57 (VVPSVVCSMCCLFGIIYCFFG), 60 to 80 (CFKAVLFLTGLMFGSVIIFLL), 93 to 113 (VEASVGIGLGIGTLCGLVTML), 117 to 137 (VGLFMVGLLLGLLVGIGTLIG), 148 to 168 (SVWVPLGVLLGLGMLFAVLTL), 181 to 201 (VFGAAVIVVATDYFVELFALV), and 216 to 236 (VCWTTWVVLGAWPALALLGVL). Residues 266–308 (RQKEERRESSRKKKRKQPQSAQHTHAAKALHPEPAYRRKPNPI) form a disordered region.

It belongs to the TMEM198 family.

It localises to the membrane. The polypeptide is Transmembrane protein 198 (tmem198ab) (Danio rerio (Zebrafish)).